A 239-amino-acid polypeptide reads, in one-letter code: Transcriptional regulatory protein BtsR (239 aa).

The region spanning 3–116 is the Response regulatory domain; that stretch reads KVLIVDDEPL…RLEKTLHRLR (114 aa). Aspartate 54 is subject to 4-aspartylphosphate. An HTH LytTR-type domain is found at 137–239; that stretch reads IPCTGHSRIY…LKSLKEAIGL (103 aa).

In terms of processing, phosphorylated by BtsS.

Functionally, member of the two-component regulatory system BtsS/BtsR. BtsR regulates expression of btsT by binding to its promoter region. The sequence is that of Transcriptional regulatory protein BtsR from Salmonella typhi.